Here is a 72-residue protein sequence, read N- to C-terminus: DNA-directed RNA polymerase subunit omega (72 aa).

This sequence belongs to the RNA polymerase subunit omega family. In terms of assembly, the RNAP catalytic core consists of 2 alpha, 1 beta, 1 beta' and 1 omega subunit. When a sigma factor is associated with the core the holoenzyme is formed, which can initiate transcription.

It catalyses the reaction RNA(n) + a ribonucleoside 5'-triphosphate = RNA(n+1) + diphosphate. In terms of biological role, promotes RNA polymerase assembly. Latches the N- and C-terminal regions of the beta' subunit thereby facilitating its interaction with the beta and alpha subunits. The polypeptide is DNA-directed RNA polymerase subunit omega (Lactobacillus johnsonii (strain CNCM I-12250 / La1 / NCC 533)).